Reading from the N-terminus, the 86-residue chain is Cell division topological specificity factor (86 aa).

It belongs to the MinE family.

Its function is as follows. Prevents the cell division inhibition by proteins MinC and MinD at internal division sites while permitting inhibition at polar sites. This ensures cell division at the proper site by restricting the formation of a division septum at the midpoint of the long axis of the cell. The polypeptide is Cell division topological specificity factor (Aliivibrio salmonicida (strain LFI1238) (Vibrio salmonicida (strain LFI1238))).